The sequence spans 201 residues: Holliday junction branch migration complex subunit RuvA (201 aa).

A domain I region spans residues 1-64 (MFAFLRGELV…EDAQQLFGFL (64 aa)). The interval 65–143 (DEEELQLFRL…KIQPAASGKT (79 aa)) is domain II. Positions 144–154 (AGAPQALQLNE) are flexible linker. The tract at residues 154 to 201 (EDALAALMTLGFPKPAAQKAISGILETSPGLSVEEVVRAALIAIHNNF) is domain III.

Belongs to the RuvA family. As to quaternary structure, homotetramer. Forms an RuvA(8)-RuvB(12)-Holliday junction (HJ) complex. HJ DNA is sandwiched between 2 RuvA tetramers; dsDNA enters through RuvA and exits via RuvB. An RuvB hexamer assembles on each DNA strand where it exits the tetramer. Each RuvB hexamer is contacted by two RuvA subunits (via domain III) on 2 adjacent RuvB subunits; this complex drives branch migration. In the full resolvosome a probable DNA-RuvA(4)-RuvB(12)-RuvC(2) complex forms which resolves the HJ.

It is found in the cytoplasm. Its function is as follows. The RuvA-RuvB-RuvC complex processes Holliday junction (HJ) DNA during genetic recombination and DNA repair, while the RuvA-RuvB complex plays an important role in the rescue of blocked DNA replication forks via replication fork reversal (RFR). RuvA specifically binds to HJ cruciform DNA, conferring on it an open structure. The RuvB hexamer acts as an ATP-dependent pump, pulling dsDNA into and through the RuvAB complex. HJ branch migration allows RuvC to scan DNA until it finds its consensus sequence, where it cleaves and resolves the cruciform DNA. The protein is Holliday junction branch migration complex subunit RuvA of Chlorobaculum tepidum (strain ATCC 49652 / DSM 12025 / NBRC 103806 / TLS) (Chlorobium tepidum).